A 2603-amino-acid chain; its full sequence is Ankyrin repeat domain-containing protein 17 (2603 aa).

Residue M1 is modified to N-acetylmethionine. Positions 1-32 (MEKATVPAAAEGEGSPPAAAAVAAPPAAAAAE) are enriched in low complexity. Residues 1–127 (MEKATVPAAA…DDDEEEEVSE (127 aa)) are disordered. S15 and S42 each carry phosphoserine. The span at 68-77 (PHHKAKRNRT) shows a compositional bias: basic residues. Residues 82-92 (SSSESSSDSDN) show a composition bias toward low complexity. Residues 93–107 (SGGGGGGGGGGGGGT) show a composition bias toward gly residues. The segment covering 112–127 (SEEEEDDDDEEEEVSE) has biased composition (acidic residues). S152 is subject to Phosphoserine. 15 ANK repeats span residues 229-258 (SDNR…SVNE), 262-291 (EGES…NVED), 296-325 (GDIT…DVNA), 329-358 (TGNT…SIED), 362-391 (NGHT…GINT), 396-425 (FKES…DQEH), 429-458 (EMHT…QVNM), 462-491 (SFES…SLEE), 495-524 (EGYT…NINA), 529-558 (TQET…DIEL), 559-588 (GCST…NVHA), 592-621 (TGDT…DLEH), 625-654 (GGRT…NVNR), 659-688 (NDHT…DPTH), and 692-721 (DGST…NLLA). A Glycyl lysine isopeptide (Lys-Gly) (interchain with G-Cter in SUMO2) cross-link involves residue K314. The tract at residues 770-792 (VRSKAASKQKSNSHLPANSQDVQ) is disordered. The segment covering 775 to 792 (ASKQKSNSHLPANSQDVQ) has biased composition (polar residues). S799 is subject to Phosphoserine. 10 ANK repeats span residues 1078-1107 (NHDT…SIEH), 1111-1140 (KGFT…DIEA), 1145-1174 (TKDT…NKEH), 1178-1207 (SDYT…EINS), 1213-1242 (LGIS…DINA), 1247-1276 (NRNT…NVEH), 1280-1309 (TGLT…DVNA), 1315-1344 (SRDT…HIDV), 1348-1377 (KGNT…DVDA), and 1381-1410 (RKIT…QFPS). Residues 1438–1522 (VQAKDRQAAE…EKEKLKVEEE (85 aa)) adopt a coiled-coil conformation. S1453 is subject to Phosphoserine. 2 disordered regions span residues 1475 to 1496 (AKRE…RKLE) and 1513 to 1713 (EKEK…PKRE). The segment covering 1477-1487 (REKRKEKRRKK) has biased composition (basic residues). Low complexity-rich tracts occupy residues 1526–1546 (LTEP…TWTT), 1598–1607 (ESKSSSTSES), and 1616–1636 (SSCS…NHAS). Phosphoserine is present on S1631. Polar residues-rich tracts occupy residues 1638-1648 (VVTTTMASKKQ) and 1671-1699 (LSET…SPNG). 3 positions are modified to phosphoserine: S1692, S1696, and S1705. In terms of domain architecture, KH spans 1721-1785 (RRSKKVSVPS…ESTRQATQLI (65 aa)). R1870 bears the Asymmetric dimethylarginine mark. Disordered regions lie at residues 1902-1991 (PRLP…PSVR), 2007-2195 (TTVT…SSSA), and 2269-2327 (VSSQ…YGSV). 2 stretches are compositionally biased toward low complexity: residues 1946–1989 (SNQN…SSPS) and 2007–2024 (TTVT…TNAT). Residues S2038, S2040, S2041, S2043, S2055, and S2063 each carry the phosphoserine modification. 3 stretches are compositionally biased toward low complexity: residues 2068–2077 (ASASEQEASS), 2087–2108 (RPPH…QQPP), and 2175–2189 (PPSH…TPAP). Positions 2269 to 2298 (VSSQSTPESMLSGKSSYLPNSDPLHQSDTS) are enriched in polar residues. A compositionally biased stretch (pro residues) spans 2303–2313 (FRPPLQRPAPS). S2373 carries the phosphoserine modification. The interval 2378–2447 (LTPCSSASNE…TGTSAPSVIG (70 aa)) is disordered. The span at 2379-2391 (TPCSSASNESPAQ) shows a compositional bias: polar residues. The span at 2392-2411 (SVSSGVRAPSPAPSSVPLGS) shows a compositional bias: low complexity. S2401 is modified (phosphoserine). A compositionally biased stretch (polar residues) spans 2435–2447 (IRQTGTSAPSVIG).

In terms of assembly, interacts (via N-terminus) with NOD2. Interacts with CDK2, MCM3, MCM5, MCM7, CDC6 and PCNA. Interacts with MAVS and IFIH1. Interacts (via the second ankyrin repeat cluster) with RIGI. Post-translationally, phosphorylated by CDK2. Highly expressed in fetal liver. Detected in adult liver cells, ovarian oocytes, seminiferous tubules of the testes and pelvic region of the kidney. It was not detected in heart, gut, lung, spleen and skeletal muscle. Earliest specific in situ marker of hepatic differentiation during embryogenesis, useful for characterization of inductive events involved in hepatic specification.

It is found in the cytoplasm. The protein localises to the nucleus. In terms of biological role, could play pivotal roles in cell cycle and DNA regulation. Involved in innate immune defense against viruse by positively regulating the viral dsRNA receptors RIGI and IFIH1 signaling pathways. Involves in NOD2- and NOD1-mediated responses to bacteria suggesting a role in innate antibacterial immune pathways too. Could play a central role for the formation and/or maintenance of the blood vessels of the circulation system. This Mus musculus (Mouse) protein is Ankyrin repeat domain-containing protein 17 (Ankrd17).